The following is a 410-amino-acid chain: Phosphopentomutase (410 aa).

Mn(2+) is bound by residues Asp-10, Asp-309, His-314, Asp-350, His-351, and His-362.

This sequence belongs to the phosphopentomutase family. Requires Mn(2+) as cofactor.

The protein resides in the cytoplasm. It catalyses the reaction 2-deoxy-alpha-D-ribose 1-phosphate = 2-deoxy-D-ribose 5-phosphate. The catalysed reaction is alpha-D-ribose 1-phosphate = D-ribose 5-phosphate. The protein operates within carbohydrate degradation; 2-deoxy-D-ribose 1-phosphate degradation; D-glyceraldehyde 3-phosphate and acetaldehyde from 2-deoxy-alpha-D-ribose 1-phosphate: step 1/2. Isomerase that catalyzes the conversion of deoxy-ribose 1-phosphate (dRib-1-P) and ribose 1-phosphate (Rib-1-P) to deoxy-ribose 5-phosphate (dRib-5-P) and ribose 5-phosphate (Rib-5-P), respectively. This is Phosphopentomutase from Aliivibrio fischeri (strain ATCC 700601 / ES114) (Vibrio fischeri).